Here is a 132-residue protein sequence, read N- to C-terminus: UPF0102 protein Acid_2433 (132 aa).

This sequence belongs to the UPF0102 family.

This Solibacter usitatus (strain Ellin6076) protein is UPF0102 protein Acid_2433.